The following is a 130-amino-acid chain: Glycine cleavage system H protein (130 aa).

Positions 24–106 (TFTVGITDHA…YGDGWLYRIT (83 aa)) constitute a Lipoyl-binding domain. The residue at position 65 (Lys-65) is an N6-lipoyllysine.

Belongs to the GcvH family. In terms of assembly, the glycine cleavage system is composed of four proteins: P, T, L and H. (R)-lipoate serves as cofactor.

Its function is as follows. The glycine cleavage system catalyzes the degradation of glycine. The H protein shuttles the methylamine group of glycine from the P protein to the T protein. This chain is Glycine cleavage system H protein, found in Coxiella burnetii (strain CbuK_Q154) (Coxiella burnetii (strain Q154)).